A 99-amino-acid chain; its full sequence is UPF0729 protein CG18508 (99 aa).

A disordered region spans residues Pro-60–Ile-99. The segment covering Val-68–Glu-77 has biased composition (acidic residues). Ser-69 is subject to Phosphoserine.

The protein belongs to the UPF0729 family.

This chain is UPF0729 protein CG18508, found in Drosophila melanogaster (Fruit fly).